A 124-amino-acid polypeptide reads, in one-letter code: Ribonuclease P protein component (124 aa).

It belongs to the RnpA family. Consists of a catalytic RNA component (M1 or rnpB) and a protein subunit.

The enzyme catalyses Endonucleolytic cleavage of RNA, removing 5'-extranucleotides from tRNA precursor.. Functionally, RNaseP catalyzes the removal of the 5'-leader sequence from pre-tRNA to produce the mature 5'-terminus. It can also cleave other RNA substrates such as 4.5S RNA. The protein component plays an auxiliary but essential role in vivo by binding to the 5'-leader sequence and broadening the substrate specificity of the ribozyme. The polypeptide is Ribonuclease P protein component (Mycolicibacterium gilvum (strain PYR-GCK) (Mycobacterium gilvum (strain PYR-GCK))).